Consider the following 46-residue polypeptide: Esculentin-1SEa (46 aa).

Cys-40 and Cys-46 are disulfide-bonded.

Expressed by the skin glands.

The protein resides in the secreted. Its function is as follows. Mast cell degranulating peptide. Causes histamine release from rat peritoneal mast cells in vitro. Has antibacterial activity against the Gram-negative bacterium E.coli K12 and Gram-positive bacterium M.luteus NCT C2665. This is Esculentin-1SEa from Lithobates sevosus (Dusky gopher frog).